Here is a 1147-residue protein sequence, read N- to C-terminus: Nucleolar protein 6 (1147 aa).

Positions 1–49 (MQKKRSRAGAAEQEAASDDGEMSDSSDKMEVSQNKGKSGIKRAPEADDV) are disordered. The segment covering 15–24 (AASDDGEMSD) has biased composition (acidic residues).

This sequence belongs to the NRAP family. Part of the small subunit (SSU) processome, composed of more than 70 proteins and the RNA chaperone small nucleolar RNA (snoRNA) U3.

Its subcellular location is the nucleus. It localises to the nucleolus. It is found in the chromosome. Its function is as follows. Part of the small subunit (SSU) processome, first precursor of the small eukaryotic ribosomal subunit. During the assembly of the SSU processome in the nucleolus, many ribosome biogenesis factors, an RNA chaperone and ribosomal proteins associate with the nascent pre-rRNA and work in concert to generate RNA folding, modifications, rearrangements and cleavage as well as targeted degradation of pre-ribosomal RNA by the RNA exosome. The chain is Nucleolar protein 6 (nol6) from Xenopus laevis (African clawed frog).